A 184-amino-acid chain; its full sequence is MSGKLTVITGPMYSGKTTELLSFVEIYKLGKKKVAVFKPKIDSRYHSTMIVSHSGNGVEAHVIERPEEMRKYIEEDTRGVFIDEVQFFSPGLFEVVKDLLDRGIDVFCAGLDLTHKQNPFETTALLLSLADTVIKKKAVCHRCGEYNATLTLKVAGGEEEIDVGGQEKYIAVCRDCYNTLKKRV.

Residues 10-17 (GPMYSGKT) and 83-86 (DEVQ) each bind ATP. The active-site Proton acceptor is the E84. Residues C140, C143, C173, and C176 each contribute to the Zn(2+) site.

It belongs to the thymidine kinase family. Homotetramer.

Its subcellular location is the cytoplasm. It carries out the reaction thymidine + ATP = dTMP + ADP + H(+). This chain is Thymidine kinase, found in Thermotoga sp. (strain RQ2).